Consider the following 429-residue polypeptide: UDP-N-acetylglucosamine 1-carboxyvinyltransferase (429 aa).

Residue 22-23 participates in phosphoenolpyruvate binding; sequence KN. Arg-102 contributes to the UDP-N-acetyl-alpha-D-glucosamine binding site. The active-site Proton donor is Cys-126. Cys-126 carries the post-translational modification 2-(S-cysteinyl)pyruvic acid O-phosphothioketal. Residues 131 to 135, Asp-316, and Ile-338 each bind UDP-N-acetyl-alpha-D-glucosamine; that span reads RPVDL.

The protein belongs to the EPSP synthase family. MurA subfamily.

It is found in the cytoplasm. The catalysed reaction is phosphoenolpyruvate + UDP-N-acetyl-alpha-D-glucosamine = UDP-N-acetyl-3-O-(1-carboxyvinyl)-alpha-D-glucosamine + phosphate. It functions in the pathway cell wall biogenesis; peptidoglycan biosynthesis. In terms of biological role, cell wall formation. Adds enolpyruvyl to UDP-N-acetylglucosamine. The polypeptide is UDP-N-acetylglucosamine 1-carboxyvinyltransferase (Methylobacterium radiotolerans (strain ATCC 27329 / DSM 1819 / JCM 2831 / NBRC 15690 / NCIMB 10815 / 0-1)).